The sequence spans 211 residues: Uridine kinase (211 aa).

13–20 (GGSGSGKT) contacts ATP.

This sequence belongs to the uridine kinase family.

It localises to the cytoplasm. It carries out the reaction uridine + ATP = UMP + ADP + H(+). The catalysed reaction is cytidine + ATP = CMP + ADP + H(+). The protein operates within pyrimidine metabolism; CTP biosynthesis via salvage pathway; CTP from cytidine: step 1/3. Its pathway is pyrimidine metabolism; UMP biosynthesis via salvage pathway; UMP from uridine: step 1/1. The chain is Uridine kinase from Lactobacillus johnsonii (strain CNCM I-12250 / La1 / NCC 533).